The primary structure comprises 145 residues: D-aminoacyl-tRNA deacylase (145 aa).

The short motif at 137 to 138 (GP) is the Gly-cisPro motif, important for rejection of L-amino acids element.

It belongs to the DTD family. As to quaternary structure, homodimer.

It localises to the cytoplasm. It catalyses the reaction glycyl-tRNA(Ala) + H2O = tRNA(Ala) + glycine + H(+). The enzyme catalyses a D-aminoacyl-tRNA + H2O = a tRNA + a D-alpha-amino acid + H(+). In terms of biological role, an aminoacyl-tRNA editing enzyme that deacylates mischarged D-aminoacyl-tRNAs. Also deacylates mischarged glycyl-tRNA(Ala), protecting cells against glycine mischarging by AlaRS. Acts via tRNA-based rather than protein-based catalysis; rejects L-amino acids rather than detecting D-amino acids in the active site. By recycling D-aminoacyl-tRNA to D-amino acids and free tRNA molecules, this enzyme counteracts the toxicity associated with the formation of D-aminoacyl-tRNA entities in vivo and helps enforce protein L-homochirality. The chain is D-aminoacyl-tRNA deacylase from Salmonella choleraesuis (strain SC-B67).